The chain runs to 420 residues: Phosphoribosylamine--glycine ligase (420 aa).

Residues 108 to 314 (KQFMEKYAIP…FAALIDALLH (207 aa)) enclose the ATP-grasp domain. 134–195 (LDERGVPIVI…EDFLAGEEFS (62 aa)) is an ATP binding site. Residues Glu284 and Asn286 each contribute to the Mg(2+) site.

It belongs to the GARS family. Mg(2+) is required as a cofactor. The cofactor is Mn(2+).

It catalyses the reaction 5-phospho-beta-D-ribosylamine + glycine + ATP = N(1)-(5-phospho-beta-D-ribosyl)glycinamide + ADP + phosphate + H(+). It participates in purine metabolism; IMP biosynthesis via de novo pathway; N(1)-(5-phospho-D-ribosyl)glycinamide from 5-phospho-alpha-D-ribose 1-diphosphate: step 2/2. The protein is Phosphoribosylamine--glycine ligase of Listeria monocytogenes serotype 4b (strain F2365).